We begin with the raw amino-acid sequence, 60 residues long: Sec-independent protein translocase protein TatA (60 aa).

A helical transmembrane segment spans residues 1–21 (MTPAGPAQLLIVALVVIVLFG).

It belongs to the TatA/E family. In terms of assembly, the Tat system comprises two distinct complexes: a TatABC complex, containing multiple copies of TatA, TatB and TatC subunits, and a separate TatA complex, containing only TatA subunits. Substrates initially bind to the TatABC complex, which probably triggers association of the separate TatA complex to form the active translocon.

It is found in the cell membrane. Its function is as follows. Part of the twin-arginine translocation (Tat) system that transports large folded proteins containing a characteristic twin-arginine motif in their signal peptide across membranes. TatA could form the protein-conducting channel of the Tat system. The protein is Sec-independent protein translocase protein TatA of Corynebacterium glutamicum (strain R).